Here is a 460-residue protein sequence, read N- to C-terminus: Decaprenylphosphoryl-beta-D-ribose oxidase (460 aa).

In terms of domain architecture, FAD-binding PCMH-type spans T19–T193. Residues A52–N62, G116, T121–G124, C128–H131, I183, and Y414 each bind FAD.

Belongs to the DprE1 family. Monomer. Interacts with DprE2 to form an epimerase complex.

The protein localises to the periplasm. The enzyme catalyses trans,octa-cis-decaprenylphospho-beta-D-ribofuranose + FAD + H(+) = trans,octa-cis-decaprenylphospho-beta-D-erythro-pentofuranosid-2-ulose + FADH2. It participates in cell wall biogenesis; cell wall polysaccharide biosynthesis. Is inhibited by 8-nitro-benzothiazinones (BTZs) such as BTZ043; BTZs are a new class of antimycobacterial agents that block formation of both cell-wall lipoarabinomannan and arabinogalactan via inhibition of decaprenyl-phospho-arabinose (DPA) synthesis. BTZs are suicide inhibitors that act via covalent modification of DprE1; the essential nitro group of these compounds is reduced by DprE1 to a nitroso group, which then specifically reacts with Cys-386 of DprE1 to form an irreversible semimercaptal adduct. Other compounds with diverse scaffolds (dinitrobenzamides and nitrobenzoquinoxalines) also act as covalent DprE1 inhibitors. Its function is as follows. Component of the DprE1-DprE2 complex that catalyzes the 2-step epimerization of decaprenyl-phospho-ribose (DPR) to decaprenyl-phospho-arabinose (DPA), a key precursor that serves as the arabinose donor required for the synthesis of cell-wall arabinans. DprE1 catalyzes the first step of epimerization, namely FAD-dependent oxidation of the C2' hydroxyl of DPR to yield the keto intermediate decaprenyl-phospho-2'-keto-D-arabinose (DPX). The intermediate DPX is then transferred to DprE2 subunit of the epimerase complex, most probably through a 'substrate channel' at the interface of DprE1-DprE2 complex. Can also use farnesyl-phosphoryl-beta-D-ribofuranose (FPR) as substrate in vitro. Appears to be essential for the growth of M.smegmatis. The chain is Decaprenylphosphoryl-beta-D-ribose oxidase from Mycolicibacterium smegmatis (strain ATCC 700084 / mc(2)155) (Mycobacterium smegmatis).